We begin with the raw amino-acid sequence, 156 residues long: Small ribosomal subunit protein uS7 (156 aa).

It belongs to the universal ribosomal protein uS7 family. In terms of assembly, part of the 30S ribosomal subunit. Contacts proteins S9 and S11.

Its function is as follows. One of the primary rRNA binding proteins, it binds directly to 16S rRNA where it nucleates assembly of the head domain of the 30S subunit. Is located at the subunit interface close to the decoding center, probably blocks exit of the E-site tRNA. This Anaeromyxobacter sp. (strain Fw109-5) protein is Small ribosomal subunit protein uS7.